Consider the following 465-residue polypeptide: Cysteine--tRNA ligase (465 aa).

Cysteine 29 is a Zn(2+) binding site. Residues 31–41 (PTVYNYIHIGN) carry the 'HIGH' region motif. Zn(2+) contacts are provided by cysteine 209, histidine 234, and glutamate 238. Residues 266–270 (KMSKS) carry the 'KMSKS' region motif. Residue lysine 269 coordinates ATP. Serine 270 carries the post-translational modification Phosphoserine.

This sequence belongs to the class-I aminoacyl-tRNA synthetase family. Monomer. Zn(2+) serves as cofactor.

It is found in the cytoplasm. The catalysed reaction is tRNA(Cys) + L-cysteine + ATP = L-cysteinyl-tRNA(Cys) + AMP + diphosphate. This Anoxybacillus flavithermus (strain DSM 21510 / WK1) protein is Cysteine--tRNA ligase.